We begin with the raw amino-acid sequence, 193 residues long: Large ribosomal subunit protein bL25 (193 aa).

Belongs to the bacterial ribosomal protein bL25 family. CTC subfamily. In terms of assembly, part of the 50S ribosomal subunit; part of the 5S rRNA/L5/L18/L25 subcomplex. Contacts the 5S rRNA. Binds to the 5S rRNA independently of L5 and L18.

Its function is as follows. This is one of the proteins that binds to the 5S RNA in the ribosome where it forms part of the central protuberance. In Oleidesulfovibrio alaskensis (strain ATCC BAA-1058 / DSM 17464 / G20) (Desulfovibrio alaskensis), this protein is Large ribosomal subunit protein bL25.